A 125-amino-acid chain; its full sequence is Large-conductance mechanosensitive channel (125 aa).

2 helical membrane-spanning segments follow: residues 15–35 (MDLA…NSLV) and 67–87 (GSFL…FFLI).

Belongs to the MscL family. In terms of assembly, homopentamer.

The protein localises to the cell membrane. Its function is as follows. Channel that opens in response to stretch forces in the membrane lipid bilayer. May participate in the regulation of osmotic pressure changes within the cell. This is Large-conductance mechanosensitive channel from Lactobacillus gasseri (strain ATCC 33323 / DSM 20243 / BCRC 14619 / CIP 102991 / JCM 1131 / KCTC 3163 / NCIMB 11718 / NCTC 13722 / AM63).